A 248-amino-acid chain; its full sequence is Flavodoxin/ferredoxin--NADP reductase (248 aa).

The 100-residue stretch at 2–101 (ADWVTGKVTK…SEAAGFFVLD (100 aa)) folds into the FAD-binding FR-type domain. Residues 50-53 (RAYS), Y66, 74-76 (KLS), and T116 each bind FAD. NADP(+) is bound by residues 143-144 (AR), 173-174 (SR), R184, 214-216 (NPQ), and D220. Residue 247 to 248 (YW) participates in FAD binding.

The protein belongs to the ferredoxin--NADP reductase type 1 family. It depends on FAD as a cofactor.

It localises to the cytoplasm. It carries out the reaction 2 reduced [2Fe-2S]-[ferredoxin] + NADP(+) + H(+) = 2 oxidized [2Fe-2S]-[ferredoxin] + NADPH. It catalyses the reaction reduced [flavodoxin] + NADP(+) = oxidized [flavodoxin] + NADPH + 2 H(+). Its function is as follows. Transports electrons between flavodoxin or ferredoxin and NADPH. The chain is Flavodoxin/ferredoxin--NADP reductase (fpr) from Shigella flexneri.